A 734-amino-acid chain; its full sequence is Photosystem I P700 chlorophyll a apoprotein A2 (734 aa).

The next 8 helical transmembrane spans lie at 46-69 (IFAS…FHVA), 135-158 (LYTG…LHLQ), 175-199 (LNHH…HVAI), 273-291 (IAHH…GHMY), 330-353 (LHFQ…QHMY), 369-395 (AALY…IFLI), 417-439 (AIIS…LYVH), and 517-535 (FLVH…LILV). The [4Fe-4S] cluster site is built by cysteine 559 and cysteine 568. Transmembrane regions (helical) follow at residues 575 to 596 (AFYS…YWHW) and 643 to 665 (LSVW…MFLI). Residues histidine 654, methionine 662, and tyrosine 670 each contribute to the chlorophyll a site. Phylloquinone is bound at residue tryptophan 671. The chain crosses the membrane as a helical span at residues 707-727 (LVGLAHFSVGYIFTYAAFLIA).

It belongs to the PsaA/PsaB family. The PsaA/B heterodimer binds the P700 chlorophyll special pair and subsequent electron acceptors. PSI consists of a core antenna complex that captures photons, and an electron transfer chain that converts photonic excitation into a charge separation. The eukaryotic PSI reaction center is composed of at least 11 subunits. P700 is a chlorophyll a/chlorophyll a' dimer, A0 is one or more chlorophyll a, A1 is one or both phylloquinones and FX is a shared 4Fe-4S iron-sulfur center. is required as a cofactor.

The protein localises to the plastid. The protein resides in the chloroplast thylakoid membrane. The catalysed reaction is reduced [plastocyanin] + hnu + oxidized [2Fe-2S]-[ferredoxin] = oxidized [plastocyanin] + reduced [2Fe-2S]-[ferredoxin]. PsaA and PsaB bind P700, the primary electron donor of photosystem I (PSI), as well as the electron acceptors A0, A1 and FX. PSI is a plastocyanin-ferredoxin oxidoreductase, converting photonic excitation into a charge separation, which transfers an electron from the donor P700 chlorophyll pair to the spectroscopically characterized acceptors A0, A1, FX, FA and FB in turn. Oxidized P700 is reduced on the lumenal side of the thylakoid membrane by plastocyanin. The protein is Photosystem I P700 chlorophyll a apoprotein A2 of Huperzia lucidula (Shining clubmoss).